The sequence spans 599 residues: MKYIRNFSIIAHVNHGKSTLSDRFIQICGGLCDREMMSQVLDSMELERERGITIKSQSVTLNYRSRSNEQFYQLNLIDTPGHVDFSYEVSRALAACEGAVLVVDAAQGIEAQTVANYRIAMERDLKVIIALNKIDLLTADINRVSKEIEEIIGINSNDIILCSAKTGLGVLDILERIIIDIPVPQGNCDAPLQALIIDSWFNNYLGVISLICVKNGILHKGDTIQSMNTGQIYIVNQLGIFTPKQVQRMSLNCGEVGWLVYTSKNHRVMGAPVGDTLTLLINPAQKSLPNFKKIQPYVYAGLFPAGSTSQKVFADALYKLSLNDSSLHYESEYSEYLGLGFRCGFLGLLHMEIIQERLKREYAIDLIITTPGVMYEVLVVDDQIIYVDNPLKLLSITGIKEIREPIVLCNFLMPKKYLGEIIVLCVEKRGVQVSLVYKADQVMLTYELPMSEIILDFFDRMKSISNGYASLEYTFNRFQASDMVCIEILINGQRVNALAVIVHRITAEFQGRILVNKLKSLILRQQFDIVIQAVIGKRVICRDVIKQLRKNVTHKCYGGDVTRKKKLLHNQKIGKKRMKQVGKVNLPNSVFMSILNRDS.

Residues 2-185 (KYIRNFSIIA…RIIIDIPVPQ (184 aa)) form the tr-type G domain. Residues 14-19 (NHGKST) and 132-135 (NKID) contribute to the GTP site.

It belongs to the TRAFAC class translation factor GTPase superfamily. Classic translation factor GTPase family. LepA subfamily.

It is found in the cell inner membrane. The catalysed reaction is GTP + H2O = GDP + phosphate + H(+). Functionally, required for accurate and efficient protein synthesis under certain stress conditions. May act as a fidelity factor of the translation reaction, by catalyzing a one-codon backward translocation of tRNAs on improperly translocated ribosomes. Back-translocation proceeds from a post-translocation (POST) complex to a pre-translocation (PRE) complex, thus giving elongation factor G a second chance to translocate the tRNAs correctly. Binds to ribosomes in a GTP-dependent manner. This is Elongation factor 4 from Blochmanniella floridana.